The following is a 40-amino-acid chain: Photosystem II reaction center protein J (40 aa).

Residues 8 to 28 traverse the membrane as a helical segment; it reads IPLWVIGTVAGILVIGIIGIF.

The protein belongs to the PsbJ family. As to quaternary structure, PSII is composed of 1 copy each of membrane proteins PsbA, PsbB, PsbC, PsbD, PsbE, PsbF, PsbH, PsbI, PsbJ, PsbK, PsbL, PsbM, PsbT, PsbX, PsbY, PsbZ, Psb30/Ycf12, at least 3 peripheral proteins of the oxygen-evolving complex and a large number of cofactors. It forms dimeric complexes.

It is found in the plastid. The protein resides in the chloroplast thylakoid membrane. One of the components of the core complex of photosystem II (PSII). PSII is a light-driven water:plastoquinone oxidoreductase that uses light energy to abstract electrons from H(2)O, generating O(2) and a proton gradient subsequently used for ATP formation. It consists of a core antenna complex that captures photons, and an electron transfer chain that converts photonic excitation into a charge separation. This chain is Photosystem II reaction center protein J, found in Lobularia maritima (Sweet alyssum).